The sequence spans 476 residues: Aspartyl/glutamyl-tRNA(Asn/Gln) amidotransferase subunit B (476 aa).

The protein belongs to the GatB/GatE family. GatB subfamily. In terms of assembly, heterotrimer of A, B and C subunits.

The catalysed reaction is L-glutamyl-tRNA(Gln) + L-glutamine + ATP + H2O = L-glutaminyl-tRNA(Gln) + L-glutamate + ADP + phosphate + H(+). It catalyses the reaction L-aspartyl-tRNA(Asn) + L-glutamine + ATP + H2O = L-asparaginyl-tRNA(Asn) + L-glutamate + ADP + phosphate + 2 H(+). Its function is as follows. Allows the formation of correctly charged Asn-tRNA(Asn) or Gln-tRNA(Gln) through the transamidation of misacylated Asp-tRNA(Asn) or Glu-tRNA(Gln) in organisms which lack either or both of asparaginyl-tRNA or glutaminyl-tRNA synthetases. The reaction takes place in the presence of glutamine and ATP through an activated phospho-Asp-tRNA(Asn) or phospho-Glu-tRNA(Gln). In Neisseria meningitidis serogroup C (strain 053442), this protein is Aspartyl/glutamyl-tRNA(Asn/Gln) amidotransferase subunit B.